We begin with the raw amino-acid sequence, 84 residues long: Small ribosomal subunit protein bS16 (84 aa).

The protein belongs to the bacterial ribosomal protein bS16 family.

This chain is Small ribosomal subunit protein bS16, found in Burkholderia multivorans (strain ATCC 17616 / 249).